The following is a 134-amino-acid chain: uncharacterized protein (134 aa).

This is an uncharacterized protein from Saccharomyces cerevisiae (strain ATCC 204508 / S288c) (Baker's yeast).